The chain runs to 365 residues: MKKLTVAISAVAASVLMAMSAQAAEIYNKDSNKLDLYGKVNAKHYFSSNDADDGDTTYARLGFKGETQINDQLTGFGQWEYEFKGNRAESQGSSKDKTRLAFAGLKFGDYGSIDYGRNYGVAYDIGAWTDVLPEFGGDTWTQTDVFMTQRATGVATYRNNDFFGLVDGLNFAAQYQGKNDRSDFDNYTEGNGDGFGFSATYEYEGFGIGATYAKSDRTDTQVNAGKVLPEVFASGKNAEVWAAGLKYDANNIYLATTYSETQNMTVFADHFVANKAQNFEAVAQYQFDFGLRPSVAYLQSKGKDLGVWGDQDLVKYVDVGATYYFNKNMSTFVDYKINLLDKNDFTKALGVSTDDIVAVGLVYQF.

Residues 1–23 (MKKLTVAISAVAASVLMAMSAQA) form the signal peptide.

Belongs to the Gram-negative porin family. In terms of assembly, homotrimer.

It localises to the cell outer membrane. The sequence is that of Putative outer membrane porin protein NmpC (nmpC) from Escherichia coli (strain K12).